A 326-amino-acid chain; its full sequence is Probable cell division protein WhiA (326 aa).

The H-T-H motif DNA-binding region spans 275–308 (SLDELGHYADPPMTKDAVAGRIRRLLAMADKRAS).

It belongs to the WhiA family.

Its function is as follows. Involved in cell division and chromosome segregation. The chain is Probable cell division protein WhiA from Leifsonia xyli subsp. xyli (strain CTCB07).